Consider the following 549-residue polypeptide: Oxygen-dependent choline dehydrogenase (549 aa).

Residue Asp-4–Glu-33 participates in FAD binding. The Proton acceptor role is filled by His-465. Residues Pro-530–Arg-549 form a disordered region.

It belongs to the GMC oxidoreductase family. FAD serves as cofactor.

It carries out the reaction choline + A = betaine aldehyde + AH2. It catalyses the reaction betaine aldehyde + NAD(+) + H2O = glycine betaine + NADH + 2 H(+). The protein operates within amine and polyamine biosynthesis; betaine biosynthesis via choline pathway; betaine aldehyde from choline (cytochrome c reductase route): step 1/1. Functionally, involved in the biosynthesis of the osmoprotectant glycine betaine. Catalyzes the oxidation of choline to betaine aldehyde and betaine aldehyde to glycine betaine at the same rate. The polypeptide is Oxygen-dependent choline dehydrogenase (Rhizobium etli (strain ATCC 51251 / DSM 11541 / JCM 21823 / NBRC 15573 / CFN 42)).